The sequence spans 450 residues: ATP-dependent protease ATPase subunit HslU (450 aa).

Residues Ile-18 and 60–65 (GVGKTE) each bind ATP. Residues 140 to 151 (KTSSSGWAQQQE) show a composition bias toward polar residues. A disordered region spans residues 140–162 (KTSSSGWAQQQEETPENDDQRGT). ATP is bound by residues Asp-263, Glu-328, and Arg-400.

It belongs to the ClpX chaperone family. HslU subfamily. As to quaternary structure, a double ring-shaped homohexamer of HslV is capped on each side by a ring-shaped HslU homohexamer. The assembly of the HslU/HslV complex is dependent on binding of ATP.

Its subcellular location is the cytoplasm. ATPase subunit of a proteasome-like degradation complex; this subunit has chaperone activity. The binding of ATP and its subsequent hydrolysis by HslU are essential for unfolding of protein substrates subsequently hydrolyzed by HslV. HslU recognizes the N-terminal part of its protein substrates and unfolds these before they are guided to HslV for hydrolysis. The sequence is that of ATP-dependent protease ATPase subunit HslU from Idiomarina loihiensis (strain ATCC BAA-735 / DSM 15497 / L2-TR).